A 179-amino-acid polypeptide reads, in one-letter code: Inner membrane-spanning protein YciB (179 aa).

A run of 5 helical transmembrane segments spans residues Ile-22–Val-42, Met-50–Asn-70, Trp-76–Met-96, Leu-121–Leu-141, and Phe-149–Ile-169.

The protein belongs to the YciB family.

It localises to the cell inner membrane. Plays a role in cell envelope biogenesis, maintenance of cell envelope integrity and membrane homeostasis. The protein is Inner membrane-spanning protein YciB of Escherichia coli O127:H6 (strain E2348/69 / EPEC).